The sequence spans 287 residues: MKIRVPATSANLGPGFDSCGIALSAYLTINVLGESEFWEIQHTLGEEISTNEENLLIQTALKIAPELTPKVIRMVSDIPLARGLGSSSSVIVAGIELANRLAHLNLSPKEKVRLATEMEGHPDNVAPAILGDFVVASHVENQVYHVKHHFPMCDVIAFIPEEPLFTEKSRAVLPEKLAYKEAVAASSIANVMIAAILNGDLPLAGKMMEQDKWHETYRRSLVPHLKEIRRLTQQKGAYGSFLSGAGPTVLILSPEERTNEIVQSLEKLSTKASIQIFNIDQEGVQVF.

79–89 lines the ATP pocket; that stretch reads PLARGLGSSSS.

It belongs to the GHMP kinase family. Homoserine kinase subfamily.

Its subcellular location is the cytoplasm. It carries out the reaction L-homoserine + ATP = O-phospho-L-homoserine + ADP + H(+). It functions in the pathway amino-acid biosynthesis; L-threonine biosynthesis; L-threonine from L-aspartate: step 4/5. In terms of biological role, catalyzes the ATP-dependent phosphorylation of L-homoserine to L-homoserine phosphate. The chain is Homoserine kinase from Enterococcus faecalis (strain ATCC 700802 / V583).